A 483-amino-acid polypeptide reads, in one-letter code: tRNA sulfurtransferase (483 aa).

In terms of domain architecture, THUMP spans 62-166 (PEICDALTRI…QDKLILVKAR (105 aa)). ATP-binding positions include 184 to 185 (LI), lysine 266, glycine 288, and glutamine 297. Residues cysteine 345 and cysteine 457 are joined by a disulfide bond. The Rhodanese domain maps to 405-483 (LADTDVLLDI…GYTNVKVYRP (79 aa)). The Cysteine persulfide intermediate role is filled by cysteine 457.

Belongs to the ThiI family.

The protein localises to the cytoplasm. It catalyses the reaction [ThiI sulfur-carrier protein]-S-sulfanyl-L-cysteine + a uridine in tRNA + 2 reduced [2Fe-2S]-[ferredoxin] + ATP + H(+) = [ThiI sulfur-carrier protein]-L-cysteine + a 4-thiouridine in tRNA + 2 oxidized [2Fe-2S]-[ferredoxin] + AMP + diphosphate. The enzyme catalyses [ThiS sulfur-carrier protein]-C-terminal Gly-Gly-AMP + S-sulfanyl-L-cysteinyl-[cysteine desulfurase] + AH2 = [ThiS sulfur-carrier protein]-C-terminal-Gly-aminoethanethioate + L-cysteinyl-[cysteine desulfurase] + A + AMP + 2 H(+). The protein operates within cofactor biosynthesis; thiamine diphosphate biosynthesis. Its function is as follows. Catalyzes the ATP-dependent transfer of a sulfur to tRNA to produce 4-thiouridine in position 8 of tRNAs, which functions as a near-UV photosensor. Also catalyzes the transfer of sulfur to the sulfur carrier protein ThiS, forming ThiS-thiocarboxylate. This is a step in the synthesis of thiazole, in the thiamine biosynthesis pathway. The sulfur is donated as persulfide by IscS. The polypeptide is tRNA sulfurtransferase (Yersinia pseudotuberculosis serotype IB (strain PB1/+)).